The chain runs to 130 residues: Small ribosomal subunit protein uS8 (130 aa).

The protein belongs to the universal ribosomal protein uS8 family. Part of the 30S ribosomal subunit. Contacts proteins S5 and S12.

Its function is as follows. One of the primary rRNA binding proteins, it binds directly to 16S rRNA central domain where it helps coordinate assembly of the platform of the 30S subunit. The sequence is that of Small ribosomal subunit protein uS8 from Buchnera aphidicola subsp. Cinara cedri (strain Cc).